Consider the following 258-residue polypeptide: MNENTTLNALICRHARNLLLAQGWPEETDVDQRNPKYPGWISIYVLLDAPRLATLLVNRHGGVLPPHLASAIQKLTGTGAELVLSGSQWQSLPVLPADGTQVSFPYAGEWLTEDEIRAVLAAVRDAVRSVSCRVAEDTRRIRAALTTTGQTLLTRQTRRFRLVVKESDHPCWLDEDDENLPVVLDAILNRGARFSAVEMYLVSDCIEHILSSGLACDVLRIPDEPPRRWFDRGVLREVVREARNEIRSMADALAKIRK.

This is an uncharacterized protein from Escherichia coli O157:H7.